The chain runs to 1185 residues: Ovostatin homolog 1 (1185 aa).

The N-terminal stretch at 1 to 21 (MHVHVCVCLCVCIYTSSCVCA) is a signal peptide. N-linked (GlcNAc...) asparagine glycosylation is found at Asn-80, Asn-155, Asn-347, Asn-452, and Asn-725.

Belongs to the protease inhibitor I39 (alpha-2-macroglobulin) family. In terms of assembly, homotetramer.

The protein localises to the secreted. Is able to inhibit all four classes of proteinases by a unique 'trapping' mechanism. The polypeptide is Ovostatin homolog 1 (OVOS1) (Homo sapiens (Human)).